The following is a 103-amino-acid chain: UPF0145 protein BC_1816 (103 aa).

The protein belongs to the UPF0145 family.

The chain is UPF0145 protein BC_1816 from Bacillus cereus (strain ATCC 14579 / DSM 31 / CCUG 7414 / JCM 2152 / NBRC 15305 / NCIMB 9373 / NCTC 2599 / NRRL B-3711).